We begin with the raw amino-acid sequence, 364 residues long: Dual-specificity RNA methyltransferase RlmN (364 aa).

E91 (proton acceptor) is an active-site residue. The region spanning 97–333 (EDDRGTLCVS…VTVRKTRGDD (237 aa)) is the Radical SAM core domain. Cysteines 104 and 338 form a disulfide. Residues C111, C115, and C118 each coordinate [4Fe-4S] cluster. S-adenosyl-L-methionine is bound by residues 164-165 (GE), S196, 218-220 (SLH), and N295. C338 serves as the catalytic S-methylcysteine intermediate.

The protein belongs to the radical SAM superfamily. RlmN family. [4Fe-4S] cluster serves as cofactor.

It is found in the cytoplasm. It carries out the reaction adenosine(2503) in 23S rRNA + 2 reduced [2Fe-2S]-[ferredoxin] + 2 S-adenosyl-L-methionine = 2-methyladenosine(2503) in 23S rRNA + 5'-deoxyadenosine + L-methionine + 2 oxidized [2Fe-2S]-[ferredoxin] + S-adenosyl-L-homocysteine. It catalyses the reaction adenosine(37) in tRNA + 2 reduced [2Fe-2S]-[ferredoxin] + 2 S-adenosyl-L-methionine = 2-methyladenosine(37) in tRNA + 5'-deoxyadenosine + L-methionine + 2 oxidized [2Fe-2S]-[ferredoxin] + S-adenosyl-L-homocysteine. Its function is as follows. Specifically methylates position 2 of adenine 2503 in 23S rRNA and position 2 of adenine 37 in tRNAs. m2A2503 modification seems to play a crucial role in the proofreading step occurring at the peptidyl transferase center and thus would serve to optimize ribosomal fidelity. The chain is Dual-specificity RNA methyltransferase RlmN from Chromobacterium violaceum (strain ATCC 12472 / DSM 30191 / JCM 1249 / CCUG 213 / NBRC 12614 / NCIMB 9131 / NCTC 9757 / MK).